A 168-amino-acid chain; its full sequence is GPI-anchored protein LLG1 (168 aa).

The first 23 residues, 1–23 (MELLSRALFFFLLLSVLSSFSSS), serve as a signal peptide directing secretion. N-linked (GlcNAc...) asparagine glycosylation occurs at Asn57. The GPI-anchor amidated asparagine moiety is linked to residue Asn144. The propeptide at 145-168 (AATTSSSRLWLTVSAALLVFVKLF) is removed in mature form.

In terms of assembly, interacts with FER. In terms of tissue distribution, expressed in pollen, pollen tubes, sporophytic pistil tissues, in the early stages of female gametophyte development, and in unfertilized, mature ovules. Expressed in roots, lateral roots, shoots, cotyledons, petioles, developing leaves and anther filaments.

It is found in the cell membrane. Its function is as follows. Component of the FER-regulated Rho GTPase signaling complex. Acts as a chaperone and coreceptor for FER. Required for localization of FER to the plasma membrane. The chain is GPI-anchored protein LLG1 from Arabidopsis thaliana (Mouse-ear cress).